The primary structure comprises 200 residues: ATP-dependent Clp protease proteolytic subunit (200 aa).

Serine 101 acts as the Nucleophile in catalysis. Histidine 126 is a catalytic residue.

It belongs to the peptidase S14 family. As to quaternary structure, component of the chloroplastic Clp protease core complex.

It localises to the plastid. It is found in the chloroplast stroma. It carries out the reaction Hydrolysis of proteins to small peptides in the presence of ATP and magnesium. alpha-casein is the usual test substrate. In the absence of ATP, only oligopeptides shorter than five residues are hydrolyzed (such as succinyl-Leu-Tyr-|-NHMec, and Leu-Tyr-Leu-|-Tyr-Trp, in which cleavage of the -Tyr-|-Leu- and -Tyr-|-Trp bonds also occurs).. Functionally, cleaves peptides in various proteins in a process that requires ATP hydrolysis. Has a chymotrypsin-like activity. Plays a major role in the degradation of misfolded proteins. The polypeptide is ATP-dependent Clp protease proteolytic subunit (Adiantum capillus-veneris (Maidenhair fern)).